Reading from the N-terminus, the 311-residue chain is MATLIDADLLTAIVTPFDENKKIDFDSLKKLTNYLIDQGCNGFVIGGTTGETPTLTHDEKIELYKQFGQIVNGRAVVIAGTGSNNTAETIKFTNEVAEIDGIDYALVVVPPYNKPNQRSMVAHFTAVNDNVKMPFLIYNIPGRTGVRMEKETVVQLSQLDNIKGIKQCASLEEMEYIIDHKAAGFQVFTGEDTQALTARLLGANGVVSVASHIYTKEMRRMYDALYEGKYPEAAKIQRWLTLRMQALFMYPSPSPVKAVLNAQGFETGDCRLPLVALNDEEKVTLAQHLGLEDNALLQKLPLDLGKDLEND.

Thr49 contributes to the pyruvate binding site. The active-site Proton donor/acceptor is the Tyr138. Lys166 functions as the Schiff-base intermediate with substrate in the catalytic mechanism. Residue Val207 participates in pyruvate binding.

Belongs to the DapA family. In terms of assembly, homotetramer; dimer of dimers.

It localises to the cytoplasm. It carries out the reaction L-aspartate 4-semialdehyde + pyruvate = (2S,4S)-4-hydroxy-2,3,4,5-tetrahydrodipicolinate + H2O + H(+). Its pathway is amino-acid biosynthesis; L-lysine biosynthesis via DAP pathway; (S)-tetrahydrodipicolinate from L-aspartate: step 3/4. In terms of biological role, catalyzes the condensation of (S)-aspartate-beta-semialdehyde [(S)-ASA] and pyruvate to 4-hydroxy-tetrahydrodipicolinate (HTPA). In Lactobacillus helveticus (strain DPC 4571), this protein is 4-hydroxy-tetrahydrodipicolinate synthase.